Consider the following 291-residue polypeptide: Translocon-associated protein subunit alpha (291 aa).

A signal peptide spans 1-20 (MRLLPRLLLLLLLVFPATVL). Residues 21–207 (FRGGPRGSLA…EREDGLDGET (187 aa)) are Lumenal-facing. A disordered region spans residues 34–83 (DLTEDEETVEDSIIEDEDDEAEVEEDEPTDLVEDKEEEDVSGEPEASPSA). The span at 35 to 75 (LTEDEETVEDSIIEDEDDEAEVEEDEPTDLVEDKEEEDVSG) shows a compositional bias: acidic residues. N-linked (GlcNAc...) asparagine glycosylation is found at asparagine 136 and asparagine 191. Residues 208–228 (IFMYMFLAGLGLLVIVGLHQL) form a helical membrane-spanning segment. Over 229–291 (LESRKRKRPV…AQKRSVGSDE (63 aa)) the chain is Cytoplasmic. At serine 247 the chain carries Phosphoserine. Threonine 260 carries the post-translational modification Phosphothreonine. The interval 263–291 (QIMQSRRDKASPRRLPRKRAQKRSVGSDE) is disordered. Serine 273 carries the phosphoserine modification. A compositionally biased stretch (basic residues) spans 274-284 (PRRLPRKRAQK).

The protein belongs to the TRAP-alpha family. In terms of assembly, heterotetramer of TRAP-alpha, TRAP-beta, TRAP-delta and TRAP-gamma. Interacts with palmitoylated calnexin (CALX), the interaction is required for efficient folding of glycosylated proteins. In terms of processing, phosphorylated in its cytoplasmic tail.

The protein resides in the endoplasmic reticulum membrane. Functionally, TRAP proteins are part of a complex whose function is to bind calcium to the ER membrane and thereby regulate the retention of ER resident proteins. May be involved in the recycling of the translocation apparatus after completion of the translocation process or may function as a membrane-bound chaperone facilitating folding of translocated proteins. In Pongo abelii (Sumatran orangutan), this protein is Translocon-associated protein subunit alpha (SSR1).